The sequence spans 82 residues: RNA-binding protein Hfq (82 aa).

Positions 11-71 constitute a Sm domain; it reads DTFLNHVRKT…ISTIMPGAPI (61 aa).

The protein belongs to the Hfq family. As to quaternary structure, homohexamer.

Functionally, RNA chaperone that binds small regulatory RNA (sRNAs) and mRNAs to facilitate mRNA translational regulation in response to envelope stress, environmental stress and changes in metabolite concentrations. Also binds with high specificity to tRNAs. The protein is RNA-binding protein Hfq of Bradyrhizobium sp. (strain BTAi1 / ATCC BAA-1182).